The following is a 186-amino-acid chain: MSVAEIRKSAETRMAKSLDTLKVNLSKIRTGRAHTGILDHVQVEYYGSPVPVSQVANVNLVDARTISVQPYEKPMAAAIEKAIRESDLGLNPMSLGDSIRVPMPALTEERRRDLTKVVKGEGEDAKIAVRNLRREANESLKKLVKDKEISEDDERRAQDDIQKLTDRNVTEIDKLITQKEAEIMTV.

It belongs to the RRF family.

Its subcellular location is the cytoplasm. Its function is as follows. Responsible for the release of ribosomes from messenger RNA at the termination of protein biosynthesis. May increase the efficiency of translation by recycling ribosomes from one round of translation to another. This chain is Ribosome-recycling factor, found in Bordetella petrii (strain ATCC BAA-461 / DSM 12804 / CCUG 43448).